Consider the following 204-residue polypeptide: COBRA-like protein 5 (204 aa).

A signal peptide spans 1–24 (MESLFSTMIVLLLVSFSCLISTEA). N31 and N195 each carry an N-linked (GlcNAc...) asparagine glycan.

Belongs to the COBRA family. As to expression, expressed in roots, stems, leaves, flowers and siliques.

This Arabidopsis thaliana (Mouse-ear cress) protein is COBRA-like protein 5 (COBL5).